The primary structure comprises 284 residues: Zinc finger protein ZAT3 (284 aa).

A compositionally biased stretch (basic and acidic residues) spans 1–12 (MNNNHSYDDRSF). The disordered stretch occupies residues 1 to 76 (MNNNHSYDDR…KPDPNAPKIT (76 aa)). Positions 18 to 37 (PSNTSNPNPNLQFALSSSYD) are enriched in polar residues. Over residues 47 to 62 (TVASSSSSSPKSASKP) the composition is skewed to low complexity. C2H2-type zinc fingers lie at residues 77-99 (RPCT…MRCH), 162-184 (FECG…RASH), and 222-244 (HKCN…MRCH).

In terms of assembly, interacts (via the EAR motif) with TPL. Expressed exclusively in pollen.

The protein localises to the nucleus. Mediates the regulation of male germ cell division by DUO1. The protein is Zinc finger protein ZAT3 of Arabidopsis thaliana (Mouse-ear cress).